We begin with the raw amino-acid sequence, 290 residues long: 33 kDa chaperonin (290 aa).

Intrachain disulfides connect C235/C237 and C268/C271.

Belongs to the HSP33 family. In terms of processing, under oxidizing conditions two disulfide bonds are formed involving the reactive cysteines. Under reducing conditions zinc is bound to the reactive cysteines and the protein is inactive.

It localises to the cytoplasm. Redox regulated molecular chaperone. Protects both thermally unfolding and oxidatively damaged proteins from irreversible aggregation. Plays an important role in the bacterial defense system toward oxidative stress. The protein is 33 kDa chaperonin of Streptococcus pneumoniae (strain JJA).